The sequence spans 331 residues: Major outer membrane protein P.IB (331 aa).

Residues 1-19 (MKKSLIALTLAALPVAAMA) form the signal peptide.

This sequence belongs to the Gram-negative porin family. Homotrimer.

It is found in the cell outer membrane. In terms of biological role, serves as a slightly cation selective porin. In Neisseria meningitidis serogroup B (strain ATCC BAA-335 / MC58), this protein is Major outer membrane protein P.IB (porB).